The chain runs to 212 residues: Probable GH family 25 lysozyme 2 (212 aa).

An N-terminal signal peptide occupies residues 1 to 19 (MRFIALLISFFALLKVISA). Positions 20 to 212 (ISGVDISSAS…GLGFDLNWYP (193 aa)) constitute a Ch-type lysozyme domain. Active-site residues include Asp24, Asp112, and Glu114.

Belongs to the glycosyl hydrolase 25 family.

It localises to the secreted. It catalyses the reaction Hydrolysis of (1-&gt;4)-beta-linkages between N-acetylmuramic acid and N-acetyl-D-glucosamine residues in a peptidoglycan and between N-acetyl-D-glucosamine residues in chitodextrins.. This is Probable GH family 25 lysozyme 2 from Dictyostelium discoideum (Social amoeba).